The chain runs to 446 residues: UPF0597 protein DvMF_1488 (446 aa).

The protein belongs to the UPF0597 family.

The sequence is that of UPF0597 protein DvMF_1488 from Nitratidesulfovibrio vulgaris (strain DSM 19637 / Miyazaki F) (Desulfovibrio vulgaris).